The chain runs to 505 residues: 2,3-bisphosphoglycerate-independent phosphoglycerate mutase (505 aa).

Residues Asp-13 and Ser-63 each contribute to the Mn(2+) site. The active-site Phosphoserine intermediate is Ser-63. Residues His-124, 153–154 (RD), Arg-183, Arg-189, 254–257 (RADR), and Lys-330 each bind substrate. Mn(2+)-binding residues include Asp-396, His-400, Asp-437, His-438, and His-456.

This sequence belongs to the BPG-independent phosphoglycerate mutase family. As to quaternary structure, monomer. The cofactor is Mn(2+).

It carries out the reaction (2R)-2-phosphoglycerate = (2R)-3-phosphoglycerate. Its pathway is carbohydrate degradation; glycolysis; pyruvate from D-glyceraldehyde 3-phosphate: step 3/5. Functionally, catalyzes the interconversion of 2-phosphoglycerate and 3-phosphoglycerate. This Ruegeria pomeroyi (strain ATCC 700808 / DSM 15171 / DSS-3) (Silicibacter pomeroyi) protein is 2,3-bisphosphoglycerate-independent phosphoglycerate mutase.